The following is a 160-amino-acid chain: Ribosomal RNA large subunit methyltransferase H (160 aa).

S-adenosyl-L-methionine is bound by residues Leu76, Gly108, and 127–132 (LGKLTW).

The protein belongs to the RNA methyltransferase RlmH family. Homodimer.

The protein resides in the cytoplasm. The enzyme catalyses pseudouridine(1915) in 23S rRNA + S-adenosyl-L-methionine = N(3)-methylpseudouridine(1915) in 23S rRNA + S-adenosyl-L-homocysteine + H(+). Its function is as follows. Specifically methylates the pseudouridine at position 1915 (m3Psi1915) in 23S rRNA. The chain is Ribosomal RNA large subunit methyltransferase H from Agrobacterium fabrum (strain C58 / ATCC 33970) (Agrobacterium tumefaciens (strain C58)).